We begin with the raw amino-acid sequence, 417 residues long: Actin-related protein 10 (417 aa).

The protein belongs to the actin family. Subunit of dynactin, a multiprotein complex part of a tripartite complex with dynein and a adapter, such as BICDL1, BICD2 or HOOK3. The dynactin complex is built around ACTR1A/ACTB filament and consists of an actin-related filament composed of a shoulder domain, a pointed end and a barbed end. Its length is defined by its flexible shoulder domain. The soulder is composed of 2 DCTN1 subunits, 4 DCTN2 and 2 DCTN3. The 4 DCNT2 (via N-terminus) bind the ACTR1A filament and act as molecular rulers to determine the length. The pointed end is important for binding dynein-dynactin cargo adapters. Consists of 4 subunits: ACTR10, DCNT4, DCTN5 and DCTN6. The barbed end is composed of a CAPZA1:CAPZB heterodimers, which binds ACTR1A/ACTB filament and dynactin and stabilizes dynactin.

The protein localises to the cytoplasm. Its subcellular location is the cytoskeleton. Functionally, part of the dynactin complex that activates the molecular motor dynein for ultra-processive transport along microtubules. The protein is Actin-related protein 10 (Actr10) of Mus musculus (Mouse).